The primary structure comprises 570 residues: Multidrug and toxin extrusion protein 1 (570 aa).

An N-acetylmethionine modification is found at methionine 1. Topologically, residues 1–37 (MEAPEEPAPVRGGPEATLEIHGSRFLRLSAFREELRA) are cytoplasmic. A helical membrane pass occupies residues 38–58 (LLVLAGPAFLVQLMVFLISFI). Residues 59 to 72 (SSVFCGHLGKLELD) are Extracellular-facing. Residues 73-93 (AVTLAIAVINVTGVSVGFGLS) traverse the membrane as a helical segment. Residues 94-120 (SACDTLISQTYGSQNLKHVGVILQRSA) lie on the Cytoplasmic side of the membrane. The chain crosses the membrane as a helical span at residues 121-141 (LILLLCCFPCWALFLNTQHIL). At 142-152 (LLFRQDPDVSR) the chain is on the extracellular side. Residues 153–173 (LTQTYVTIFIPALPATFLYML) traverse the membrane as a helical segment. The Cytoplasmic segment spans residues 174 to 176 (QVK). A helical membrane pass occupies residues 177-197 (YLLNQGIVLPQIVTGVAANLV). Residues 198-216 (NALANYLFLHQLHLGAIGS) are Extracellular-facing. A helical transmembrane segment spans residues 217-237 (ALANLISQYTLALLLFFYILG). The Cytoplasmic segment spans residues 238-251 (KKLHQATWGGWSLE). The chain crosses the membrane as a helical span at residues 252 to 272 (CLQDWASFLHLAVPSMLMLCM). At 273-295 (EWWAYEVGSFLSGILGMVELGAQ) the chain is on the extracellular side. A helical membrane pass occupies residues 296-316 (SIVYELAIIVYMVPAGFSVAA). Residues 317–336 (SVRVGNALGAGDMEQARKSS) are Cytoplasmic-facing. A helical transmembrane segment spans residues 337 to 357 (TVSLLITVLFAVAFSVLLLSC). Residues 358–370 (KDHVGYIFTTDRD) lie on the Extracellular side of the membrane. Residues 371–391 (IINLVAQVVPIYAVSHLFEAL) traverse the membrane as a helical segment. At 392-408 (ACTSGGVLRGSGNQKVG) the chain is on the cytoplasmic side. A helical membrane pass occupies residues 409–429 (AIVNTIGYYVVGLPIGIALMF). The Extracellular portion of the chain corresponds to 430–437 (ATKLGVMG). A helical transmembrane segment spans residues 438 to 458 (LWSGIIICTVFQAVCFLGFII). Residues 459-546 (QLNWKKACQQ…LSRKQLVLRR (88 aa)) are Cytoplasmic-facing. Positions 508-534 (DVGKTGETQSDQQMRQEEPLPEHPQDS) are disordered. The segment covering 521-533 (MRQEEPLPEHPQD) has biased composition (basic and acidic residues). Residues 547–567 (GLLLLGVFLILLVGILVRFYV) form a helical membrane-spanning segment. Topologically, residues 568-570 (RIQ) are extracellular.

This sequence belongs to the multi antimicrobial extrusion (MATE) (TC 2.A.66.1) family.

It is found in the cell membrane. It localises to the apical cell membrane. The catalysed reaction is thiamine(out) + H(+)(in) = thiamine(in) + H(+)(out). It catalyses the reaction estrone 3-sulfate(in) + H(+)(out) = estrone 3-sulfate(out) + H(+)(in). The enzyme catalyses creatinine(in) + H(+)(out) = creatinine(out) + H(+)(in). It carries out the reaction agmatine(in) + H(+)(out) = agmatine(out) + H(+)(in). Multidrug efflux pump that functions as a H(+)/organic cation antiporter. Plays a physiological role in the excretion of cationic compounds including endogenous metabolites, drugs, toxins through the kidney and liver, into urine and bile respectively. Mediates the efflux of endogenous compounds such as creatinine, vitamin B1/thiamine, agmatine and estrone-3-sulfate. May also contribute to regulate the transport of cationic compounds in testis across the blood-testis-barrier. The sequence is that of Multidrug and toxin extrusion protein 1 (SLC47A1) from Pongo abelii (Sumatran orangutan).